Here is a 674-residue protein sequence, read N- to C-terminus: MTTASSDPLLQPFTLKHLVLKNRVMSTSHASRLTRDEFPQEVYQRYHEEKAKGGLALTMFGGSSNVSLDSPNTFQQINLSADAVVPHLRRFSDRIHTHGAALMCQITHLGRRGDAYTEPWLPMIAPSPVRETLHRAMPQAIHDADIKRVIRDFGLAAKRCRDGGLDGIETHAGGHLIGQFMDPTVNLRTDKYGGSTANRVRFAIEVHEEIRKQVGDDFVVGFRFALEDGCSFEEGLEMSRILQGTGLFDFFNVTFGRMDTKMALAVNSMPGMFVPSAPWLPKAAAFKRAVDLPVFHAAKIADLATARYAIREGLLDMVGMTRAHIAEPHLVKLVEAGKEDEARPCVGASFCRNFRATCIHNPATSRETYLTHDIPKAAQTKRVLIVGAGPAGLEAARICATRGHDVTVLEANSTAGGQLLLAATGSWRRDLIGIVDWRVSALERLSVDVRYNHYAELSDVLDHGADVVIIATGGLPNLDALPGAEHCKSVFDALTETPPREGSVIVYDGTGRHNAYLCAERYVDAGLDVSLALIDSMPAQETGGRGDDQVWMRNIARWDVPVRTNIELIEVTASSNGKRRAVFQHHLTNERVELEADHVVVERGMLAVEDLFEAARMYSANDGYTDLEAFATGKPQPGHEAEEGQFHLYRIGDASASRDIHTAIYDAYRLCLAL.

Glycine 62 and glutamine 105 together coordinate FMN. Catalysis depends on histidine 175, which acts as the Proton donor. The FMN site is built by arginine 223 and lysine 299. Residues cysteine 345, cysteine 351, and cysteine 358 each coordinate [4Fe-4S] cluster. Positions 391, 418, and 428 each coordinate FAD.

In the N-terminal section; belongs to the NADH:flavin oxidoreductase/NADH oxidase family. The cofactor is [4Fe-4S] cluster. It depends on FAD as a cofactor. FMN serves as cofactor.

The enzyme catalyses 3-phenylpropanoate + NAD(+) = (E)-cinnamate + NADH + H(+). It catalyses the reaction N-methyl-L-proline + NAD(+) + H2O = L-proline + formaldehyde + NADH + H(+). Functionally, a member of the 2-enoate reductase subfamily of old yellow enzymes (OYE) able to reduce alpha/beta alkenes near electron-withdrawing groups as well as perform oxidative demethylation chemistry. Prefers NADH over NADPH as cosubstrate. May play a role in osmotic stress response in situ. The polypeptide is Multifunctional alkene reductase/demethylase OYE (Caballeronia cordobensis (Burkholderia cordobensis)).